A 505-amino-acid polypeptide reads, in one-letter code: ATP synthase subunit alpha, chloroplastic (505 aa).

Residue 170–177 (GDRQTGKT) coordinates ATP.

Belongs to the ATPase alpha/beta chains family. In terms of assembly, F-type ATPases have 2 components, CF(1) - the catalytic core - and CF(0) - the membrane proton channel. CF(1) has five subunits: alpha(3), beta(3), gamma(1), delta(1), epsilon(1). CF(0) has four main subunits: a, b, b' and c.

Its subcellular location is the plastid. It is found in the chloroplast thylakoid membrane. The catalysed reaction is ATP + H2O + 4 H(+)(in) = ADP + phosphate + 5 H(+)(out). In terms of biological role, produces ATP from ADP in the presence of a proton gradient across the membrane. The alpha chain is a regulatory subunit. This Oenothera parviflora (Small-flowered evening primrose) protein is ATP synthase subunit alpha, chloroplastic.